Here is a 904-residue protein sequence, read N- to C-terminus: Pentatricopeptide repeat-containing protein At4g30825, chloroplastic (904 aa).

A chloroplast-targeting transit peptide spans Met-1–Arg-61. Residues Asn-75–Gln-94 are disordered. 20 PPR repeats span residues Asn-173–Phe-203, Ser-209–Pro-243, Asn-244–Phe-274, Cys-278–Leu-312, Lys-313–Pro-347, Asn-348–Pro-382, Asp-383–Pro-417, Asn-418–Tyr-452, Asn-487–Phe-521, Glu-522–Asp-553, Asn-557–Leu-591, Asp-592–Gln-622, Asp-628–Trp-662, Asn-663–Pro-697, Asn-698–Asp-732, Val-733–Val-766, Ser-767–Pro-801, Asp-802–Pro-836, Asp-837–Pro-871, and Asp-872–Ile-904.

Belongs to the PPR family. P subfamily.

It localises to the plastid. The protein localises to the chloroplast. This is Pentatricopeptide repeat-containing protein At4g30825, chloroplastic from Arabidopsis thaliana (Mouse-ear cress).